A 422-amino-acid chain; its full sequence is Leucine-rich repeat protein 1 (422 aa).

LRR repeat units follow at residues 184–207 (LKNL…IGDL), 209–230 (HLQE…LCTS), 233–258 (QKSL…QFRE), 260–279 (TNLN…IGQL), 280–301 (TNLR…EFKM), and 304–327 (LEYL…KLQV).

Component of the probable ECS(LRR1) E3 ubiquitin-protein ligase complex which contains CUL2, RBX1, Elongin BC complex and LRR1. Interacts with CUL2, RBX1, ELOB and ELOC.

The protein resides in the nucleus. Its pathway is protein modification; protein ubiquitination. In terms of biological role, substrate recognition subunit of an ECS (Elongin BC-CUL2/5-SOCS-box protein) E3 ubiquitin-protein ligase complex which mediates the ubiquitination and subsequent proteasomal degradation of target proteins. ECS(LRR1) ubiquitinates MCM7 and promotes CMG replisome disassembly by VCP and chromatin extraction during S-phase. May negatively regulate the 4-1BB-mediated signaling cascades which result in the activation of NK-kappaB and JNK1. This is Leucine-rich repeat protein 1 from Mus musculus (Mouse).